The following is a 301-amino-acid chain: Homoserine O-acetyltransferase (301 aa).

Cys142 acts as the Acyl-thioester intermediate in catalysis. Lys163 and Ser192 together coordinate substrate. The active-site Proton acceptor is His235. Residue Glu237 is part of the active site. Substrate is bound at residue Arg249.

This sequence belongs to the MetA family.

It localises to the cytoplasm. It carries out the reaction L-homoserine + acetyl-CoA = O-acetyl-L-homoserine + CoA. It participates in amino-acid biosynthesis; L-methionine biosynthesis via de novo pathway; O-acetyl-L-homoserine from L-homoserine: step 1/1. Transfers an acetyl group from acetyl-CoA to L-homoserine, forming acetyl-L-homoserine. In Bacillus cereus (strain ATCC 14579 / DSM 31 / CCUG 7414 / JCM 2152 / NBRC 15305 / NCIMB 9373 / NCTC 2599 / NRRL B-3711), this protein is Homoserine O-acetyltransferase.